The primary structure comprises 421 residues: MNTGKQQKPVLTGQRFKTRKRDEKEKFEPTVFRDTIVQGLNEAGGDLDALAKFLDVTGSRLDYRRYADTLFDILIAGSMLAPGGTRIDDADKTKVTQHCVFNAEENHTTIRSYAQVFNKLIRRYKYLEKAFEEEIKKLLLFLKGFTESEQTKLAMLTGVLLANGTLPPPILTSLFSDNLVKEGISASFAVKMFKAWIAEKDANAVTSALRKANLDKKLLELFPANKQNVEHFTKFFTEAGLKELSDFLRTQQTLGTRKELQKELQERLSQQCPIREIVVYVKEEMKKNDLQEQAVIGLLWTCLMNAVEWNKKEELVTEQALKHLKHYAPLLAVFSTQGQSELVLLLKIQEYCYDNIHFMKSFSKIVVLFYKADVVSEEAIMKWYKDAHAAKGKSVFLEQMKKFVEWLQNAEEESESEGEED.

Residues 1–24 (MNTGKQQKPVLTGQRFKTRKRDEK) form a disordered region. Positions 250–417 (TQQTLGTRKE…QNAEEESESE (168 aa)) constitute a W2 domain.

Belongs to the BZW family.

It is found in the cytoplasm. Its function is as follows. Translation initiation regulator which may repress non-AUG initiated translation and repeat-associated non-AUG (RAN) initiated translation by acting as a competitive inhibitor of eukaryotic translation initiation factor 5 (EIF5) function. This Danio rerio (Zebrafish) protein is eIF5-mimic protein 1 (bzw2).